The sequence spans 236 residues: Phosphoribosylaminoimidazole-succinocarboxamide synthase (236 aa).

It belongs to the SAICAR synthetase family.

It catalyses the reaction 5-amino-1-(5-phospho-D-ribosyl)imidazole-4-carboxylate + L-aspartate + ATP = (2S)-2-[5-amino-1-(5-phospho-beta-D-ribosyl)imidazole-4-carboxamido]succinate + ADP + phosphate + 2 H(+). Its pathway is purine metabolism; IMP biosynthesis via de novo pathway; 5-amino-1-(5-phospho-D-ribosyl)imidazole-4-carboxamide from 5-amino-1-(5-phospho-D-ribosyl)imidazole-4-carboxylate: step 1/2. This chain is Phosphoribosylaminoimidazole-succinocarboxamide synthase, found in Campylobacter curvus (strain 525.92).